Reading from the N-terminus, the 85-residue chain is Large ribosomal subunit protein bL27 (85 aa).

Residues 1-21 form a disordered region; that stretch reads MAHKKGVGSSRNGRDSDGQRL.

Belongs to the bacterial ribosomal protein bL27 family.

The polypeptide is Large ribosomal subunit protein bL27 (Citrifermentans bemidjiense (strain ATCC BAA-1014 / DSM 16622 / JCM 12645 / Bem) (Geobacter bemidjiensis)).